The sequence spans 328 residues: Extracellular exo-alpha-(1-&gt;5)-L-arabinofuranosidase (328 aa).

The tat-tyPE signal signal peptide spans 1 to 43; the sequence is MCTREAVRMSREHDLPEIPSRRLLLKGAAAAGALTAVPGVAHA. Aspartate 60 serves as the catalytic Proton acceptor. Glutamate 236 functions as the Proton donor in the catalytic mechanism.

The protein belongs to the glycosyl hydrolase 43 family. Post-translationally, predicted to be exported by the Tat system. The position of the signal peptide cleavage has been experimentally proven.

Its subcellular location is the secreted. It catalyses the reaction Hydrolysis of terminal non-reducing alpha-L-arabinofuranoside residues in alpha-L-arabinosides.. It participates in glycan metabolism; L-arabinan degradation. Involved in the degradation of arabinan and is a key enzyme in the complete degradation of the plant cell wall. Catalyzes only the cleavage of terminal alpha-(1-&gt;5) arabinofuranosyl bonds of arabinan present in the arabinofuranosyl polysaccharides or oligosaccharides. It cannot act on other arabinose-containing polysaccharides and arabinoxylo-oligosaccharides. The sequence is that of Extracellular exo-alpha-(1-&gt;5)-L-arabinofuranosidase from Streptomyces chartreusis.